The primary structure comprises 78 residues: UPF0291 protein MCCL_0996 (78 aa).

The protein belongs to the UPF0291 family.

It localises to the cytoplasm. This is UPF0291 protein MCCL_0996 from Macrococcus caseolyticus (strain JCSC5402) (Macrococcoides caseolyticum).